Consider the following 290-residue polypeptide: Signal peptidase I (290 aa).

Residues 1–13 lie on the Cytoplasmic side of the membrane; it reads MKFLRSVYAFCSS. Residues 14 to 34 form a helical membrane-spanning segment; that stretch reads WVGTIIIVLLVIFFIAQAFII. Over 35-290 the chain is Extracellular; it reads PSRSMVGTLY…KIIKKEKATH (256 aa). Residues Ser38 and Lys106 contribute to the active site.

Belongs to the peptidase S26 family.

It is found in the cell membrane. The enzyme catalyses Cleavage of hydrophobic, N-terminal signal or leader sequences from secreted and periplasmic proteins.. The protein is Signal peptidase I (lepB) of Helicobacter pylori (strain J99 / ATCC 700824) (Campylobacter pylori J99).